The following is a 34-amino-acid chain: Photosystem II reaction center protein M (34 aa).

The chain crosses the membrane as a helical span at residues 5–25 (ILAFIATALFILIPTAFSLIL).

Belongs to the PsbM family. In terms of assembly, PSII is composed of 1 copy each of membrane proteins PsbA, PsbB, PsbC, PsbD, PsbE, PsbF, PsbH, PsbI, PsbJ, PsbK, PsbL, PsbM, PsbT, PsbX, PsbY, PsbZ, Psb30/Ycf12, at least 3 peripheral proteins of the oxygen-evolving complex and a large number of cofactors. It forms dimeric complexes.

The protein resides in the plastid. It is found in the chloroplast thylakoid membrane. In terms of biological role, one of the components of the core complex of photosystem II (PSII). PSII is a light-driven water:plastoquinone oxidoreductase that uses light energy to abstract electrons from H(2)O, generating O(2) and a proton gradient subsequently used for ATP formation. It consists of a core antenna complex that captures photons, and an electron transfer chain that converts photonic excitation into a charge separation. This subunit is found at the monomer-monomer interface. This chain is Photosystem II reaction center protein M, found in Huperzia lucidula (Shining clubmoss).